A 538-amino-acid chain; its full sequence is Nectin-2 (538 aa).

The first 31 residues, M1–A31, serve as a signal peptide directing secretion. In terms of domain architecture, Ig-like V-type spans Q32–L156. The Extracellular portion of the chain corresponds to Q32 to G360. Cystine bridges form between C54–C140, C183–C238, and C283–C329. N-linked (GlcNAc...) asparagine glycosylation is present at N137. Ig-like C2-type domains follow at residues P162 to S256 and P261 to F345. N-linked (GlcNAc...) asparagine glycosylation is present at N324. A helical transmembrane segment spans residues I361–I381. At C382–V538 the chain is on the cytoplasmic side. The disordered stretch occupies residues T390–K414. The residue at position 410 (T410) is a Phosphothreonine. S433, G465, and G470 each carry phosphoserine. The tract at residues E462 to D489 is disordered.

The protein belongs to the nectin family. As to quaternary structure, can form trans-heterodimers with NECTIN3. Interacts with CD226 or with PVRIG; these interactions are competitive and have a differential functional outcome on T-cell activation, either positive or negative, respectively. Binds with low affinity to TIGIT. In terms of assembly, (Microbial infection) Interacts with herpes simplex virus 1 (HHV-1) mutant Rid1, herpes simplex virus 1 (HHV-2) and pseudorabies virus (PRV) envelope glycoprotein D. As to expression, ubiquitous.

The protein localises to the cell membrane. Its function is as follows. Modulator of T-cell signaling. Can be either a costimulator of T-cell function, or a coinhibitor, depending on the receptor it binds to. Upon binding to CD226, stimulates T-cell proliferation and cytokine production, including that of IL2, IL5, IL10, IL13, and IFNG. Upon interaction with PVRIG, inhibits T-cell proliferation. These interactions are competitive. Probable cell adhesion protein. In terms of biological role, (Microbial infection) Acts as a receptor for herpes simplex virus 1 (HHV-1) mutant Rid1, herpes simplex virus 1 (HHV-2) and pseudorabies virus (PRV). The protein is Nectin-2 of Homo sapiens (Human).